A 196-amino-acid polypeptide reads, in one-letter code: Probable GTP-binding protein EngB (196 aa).

The 175-residue stretch at 22–196 (NLPEIALAGR…GNWIEDKISQ (175 aa)) folds into the EngB-type G domain. GTP contacts are provided by residues 30-37 (GRSNVGKS), 57-61 (GKTQT), 75-78 (DVPG), 142-145 (TKMD), and 175-177 (FSS). Mg(2+) is bound by residues serine 37 and threonine 59.

Belongs to the TRAFAC class TrmE-Era-EngA-EngB-Septin-like GTPase superfamily. EngB GTPase family. Mg(2+) serves as cofactor.

Its function is as follows. Necessary for normal cell division and for the maintenance of normal septation. In Lactobacillus acidophilus (strain ATCC 700396 / NCK56 / N2 / NCFM), this protein is Probable GTP-binding protein EngB.